Consider the following 365-residue polypeptide: DNA replication and repair protein RecF (365 aa).

30–37 (GDNGEGKT) is a binding site for ATP.

This sequence belongs to the RecF family.

It is found in the cytoplasm. In terms of biological role, the RecF protein is involved in DNA metabolism; it is required for DNA replication and normal SOS inducibility. RecF binds preferentially to single-stranded, linear DNA. It also seems to bind ATP. This is DNA replication and repair protein RecF from Leptospira interrogans serogroup Icterohaemorrhagiae serovar copenhageni (strain Fiocruz L1-130).